A 25-amino-acid chain; its full sequence is Gastrin-releasing peptide (25 aa).

Met25 is modified (methionine amide).

This sequence belongs to the bombesin/neuromedin-B/ranatensin family.

The protein localises to the secreted. The protein resides in the cytoplasmic vesicle. It localises to the secretory vesicle lumen. Functionally, stimulates the release of gastrin and other gastrointestinal hormones. This is Gastrin-releasing peptide (grp) from Scyliorhinus canicula (Small-spotted catshark).